The primary structure comprises 123 residues: Histone H2B (123 aa).

The disordered stretch occupies residues 1–31 (MPPKVASKGAKKAASKAKAARSGEKKKKRRR). A compositionally biased stretch (basic residues) spans 9–31 (GAKKAASKAKAARSGEKKKKRRR). A glycan (O-linked (GlcNAc) serine) is linked at Ser-110. A Glycyl lysine isopeptide (Lys-Gly) (interchain with G-Cter in ubiquitin) cross-link involves residue Lys-118.

The protein belongs to the histone H2B family. In terms of assembly, the nucleosome is a histone octamer containing two molecules each of H2A, H2B, H3 and H4 assembled in one H3-H4 heterotetramer and two H2A-H2B heterodimers. The octamer wraps approximately 147 bp of DNA. In terms of processing, monoubiquitination of Lys-118 gives a specific tag for epigenetic transcriptional activation and is also prerequisite for histone H3 'Lys-4' and 'Lys-79' methylation. GlcNAcylation at Ser-110 promotes monoubiquitination of Lys-118. It fluctuates in response to extracellular glucose, and associates with transcribed genes.

It localises to the nucleus. The protein localises to the chromosome. Its function is as follows. Core component of nucleosome. Nucleosomes wrap and compact DNA into chromatin, limiting DNA accessibility to the cellular machineries which require DNA as a template. Histones thereby play a central role in transcription regulation, DNA repair, DNA replication and chromosomal stability. DNA accessibility is regulated via a complex set of post-translational modifications of histones, also called histone code, and nucleosome remodeling. The protein is Histone H2B of Platynereis dumerilii (Dumeril's clam worm).